A 348-amino-acid polypeptide reads, in one-letter code: Histidinol-phosphate aminotransferase (348 aa).

Lys210 carries the post-translational modification N6-(pyridoxal phosphate)lysine.

It belongs to the class-II pyridoxal-phosphate-dependent aminotransferase family. Histidinol-phosphate aminotransferase subfamily. In terms of assembly, homodimer. It depends on pyridoxal 5'-phosphate as a cofactor.

The catalysed reaction is L-histidinol phosphate + 2-oxoglutarate = 3-(imidazol-4-yl)-2-oxopropyl phosphate + L-glutamate. It participates in amino-acid biosynthesis; L-histidine biosynthesis; L-histidine from 5-phospho-alpha-D-ribose 1-diphosphate: step 7/9. The polypeptide is Histidinol-phosphate aminotransferase (Cytophaga hutchinsonii (strain ATCC 33406 / DSM 1761 / CIP 103989 / NBRC 15051 / NCIMB 9469 / D465)).